A 359-amino-acid polypeptide reads, in one-letter code: Peptide chain release factor 1 (359 aa).

The residue at position 236 (Gln-236) is an N5-methylglutamine.

It belongs to the prokaryotic/mitochondrial release factor family. Methylated by PrmC. Methylation increases the termination efficiency of RF1.

Its subcellular location is the cytoplasm. In terms of biological role, peptide chain release factor 1 directs the termination of translation in response to the peptide chain termination codons UAG and UAA. The protein is Peptide chain release factor 1 of Streptococcus pyogenes serotype M18 (strain MGAS8232).